The primary structure comprises 125 residues: MSEKKNIYPNKEGCPVEFTLDVIGGKWKGILFYHMIDGKKRFNEFRRICPSITQRMLTLQLRELEADGIVHREVYHQVPPKVEYSLTEFGRTLEPIVLQMKEWGESNRDVLESYRSNGLVKDQQK.

One can recognise an HTH hxlR-type domain in the interval 14–112 (CPVEFTLDVI…WGESNRDVLE (99 aa)).

This is an uncharacterized protein from Bacillus subtilis (strain 168).